A 1748-amino-acid chain; its full sequence is WD repeat-containing protein 90 (1748 aa).

Positions 1–207 (MARAWQHPFL…VTPMPREMAF (207 aa)) are binds with microtubules. Serine 241 carries the phosphoserine modification. The segment at 274–308 (QTPSPTASGRAALAPRPFPEVSLSQERSDASNADG) is disordered. WD repeat units lie at residues 407–450 (GHTD…CLFR), 452–494 (PMHV…LGGE), 501–541 (AHTD…LRSC), 615–654 (SSGP…VLLE), 656–695 (EHEG…YHML), 698–737 (SHTA…QLYD), 740–779 (SSED…VLVE), 782–821 (CHRG…WHVL), 882–922 (SRLD…IIRE), 926–964 (VHPE…SPGP), 969–1009 (GHSE…QSFP), 1156–1201 (GHSA…CQHL), 1204–1245 (PHST…LVSS), 1247–1286 (RLPE…ADIS), 1298–1326 (VGAG…VCVW), 1327–1376 (DTRA…ELRC), 1433–1472 (GHRS…LVIQ), 1475–1520 (VLNQ…MELK), 1523–1562 (PHPV…TFRV), 1568–1614 (GAPI…NHCE), and 1715–1748 (GHDN…VPGL). Positions 1004–1071 (SDQSFPGAPP…GARDTRNSGA (68 aa)) are disordered.

Belongs to the WD repeat WDR90/POC16 family.

The protein resides in the cytoplasm. The protein localises to the cytoskeleton. It localises to the microtubule organizing center. It is found in the centrosome. Its subcellular location is the centriole. The protein resides in the centriolar satellite. Its function is as follows. Microtubule-binding protein that plays a crucial role in ensuring inner core protein localization within the centriole core, as well as in maintaining the microtubule wall integrity and the overall centriole roundness and stability. Required for efficient primary cilium formation. The protein is WD repeat-containing protein 90 (WDR90) of Homo sapiens (Human).